The primary structure comprises 126 residues: Aspartate 1-decarboxylase 1 (126 aa).

The active-site Schiff-base intermediate with substrate; via pyruvic acid is the Ser-25. Position 25 is a pyruvic acid (Ser) (Ser-25). Thr-57 contributes to the substrate binding site. The active-site Proton donor is Tyr-58. A substrate-binding site is contributed by 73–75 (GSA).

This sequence belongs to the PanD family. In terms of assembly, heterooctamer of four alpha and four beta subunits. Requires pyruvate as cofactor. Is synthesized initially as an inactive proenzyme, which is activated by self-cleavage at a specific serine bond to produce a beta-subunit with a hydroxyl group at its C-terminus and an alpha-subunit with a pyruvoyl group at its N-terminus.

The protein resides in the cytoplasm. The catalysed reaction is L-aspartate + H(+) = beta-alanine + CO2. The protein operates within cofactor biosynthesis; (R)-pantothenate biosynthesis; beta-alanine from L-aspartate: step 1/1. Functionally, catalyzes the pyruvoyl-dependent decarboxylation of aspartate to produce beta-alanine. The protein is Aspartate 1-decarboxylase 1 of Polaromonas sp. (strain JS666 / ATCC BAA-500).